Here is a 72-residue protein sequence, read N- to C-terminus: Translational regulator CsrA (72 aa).

This sequence belongs to the CsrA/RsmA family. Homodimer; the beta-strands of each monomer intercalate to form a hydrophobic core, while the alpha-helices form wings that extend away from the core.

It is found in the cytoplasm. A translational regulator that binds mRNA to regulate translation initiation and/or mRNA stability. Usually binds in the 5'-UTR at or near the Shine-Dalgarno sequence preventing ribosome-binding, thus repressing translation. Its main target seems to be the major flagellin gene, while its function is anatagonized by FliW. The chain is Translational regulator CsrA from Clostridium novyi (strain NT).